The chain runs to 152 residues: Natriuretic peptides A (152 aa).

Positions 1-24 are cleaved as a signal peptide; it reads MGSSAITVSFLLFLAFQLPGQTGA. 2 consecutive propeptides follow at residues 25–122 and 92–102; these read NPVY…TAPR and EGGVLGRGPWE. The interval 58 to 101 is disordered; the sequence is PSQVLSEQNEEAGAPLSPLSEMPPWMGEVNPAQREGGVLGRGPW. Serine 128 carries the post-translational modification Phosphoserine. The cysteines at positions 129 and 145 are disulfide-linked. The important for degradation of atrial natriuretic peptide by IDE stretch occupies residues 146 to 150; the sequence is NSFRY.

Belongs to the natriuretic peptide family. As to quaternary structure, homodimer; disulfide-linked antiparallel dimer. Post-translationally, the precursor molecule is proteolytically cleaved by CORIN at Arg-122 to produce the atrial natriuretic peptide. Undergoes further proteolytic cleavage by unknown proteases to give rise to long-acting natriuretic peptide, vessel dilator and kaliuretic peptide. Additional processing gives rise to the auriculin and atriopeptin peptides. In the kidneys, alternative processing by an unknown protease results in the peptide urodilatin. Cleavage by MME initiates degradation of the factor and thereby regulates its activity. Degradation by IDE results in reduced activation of NPR1 (in vitro). During IDE degradation, the resulting products can temporarily stimulate NPR2 to produce cGMP, before the fragments are completely degraded and inactivated by IDE (in vitro). In terms of processing, degraded by IDE. Post-translationally, phosphorylation on Ser-128 decreases vasorelaxant activity.

It localises to the secreted. Its subcellular location is the perikaryon. The protein resides in the cell projection. Its function is as follows. Hormone that plays a key role in mediating cardio-renal homeostasis, and is involved in vascular remodeling and regulating energy metabolism. Acts by specifically binding and stimulating NPR1 to produce cGMP, which in turn activates effector proteins, such as PRKG1, that drive various biological responses. Regulates vasodilation, natriuresis, diuresis and aldosterone synthesis and is therefore essential for regulating blood pressure, controlling the extracellular fluid volume and maintaining the fluid-electrolyte balance. Also involved in inhibiting cardiac remodeling and cardiac hypertrophy by inducing cardiomyocyte apoptosis and attenuating the growth of cardiomyocytes and fibroblasts. Plays a role in female pregnancy by promoting trophoblast invasion and spiral artery remodeling in uterus, and thus prevents pregnancy-induced hypertension. In adipose tissue, acts in various cGMP- and PKG-dependent pathways to regulate lipid metabolism and energy homeostasis. This includes up-regulating lipid metabolism and mitochondrial oxygen utilization by activating the AMP-activated protein kinase (AMPK), and increasing energy expenditure by acting via MAPK11 to promote the UCP1-dependent thermogenesis of brown adipose tissue. Binds the clearance receptor NPR3 which removes the hormone from circulation. May have a role in cardio-renal homeostasis through regulation of natriuresis, diuresis, vasodilation, and inhibiting aldosterone synthesis. In vitro, promotes the production of cGMP and induces vasodilation. May promote natriuresis, at least in part, by enhancing prostaglandin E2 synthesis resulting in the inhibition of renal Na+-K+-ATPase. However reports on the involvement of this peptide in mammal blood volume and blood pressure homeostasis are conflicting; according to a report, in vivo it is not sufficient to activate cGMP and does not inhibit collecting duct transport nor effect diuresis and natriuresis. Appears to bind to specific receptors that are distinct from the receptors bound by atrial natriuretic peptide and vessel dilator. Possibly enhances protein excretion in urine by decreasing proximal tubular protein reabsorption. Functionally, may have a role in cardio-renal homeostasis through regulation of natriuresis, diuresis, and vasodilation. In vitro, promotes the production of cGMP and induces vasodilation. May promote natriuresis, at least in part, by enhancing prostaglandin E2 synthesis resulting in the inhibition of renal Na+-K+-ATPase. However reports on the involvement of this peptide in mammal blood volume and blood pressure homeostasis are conflicting; according to a report it is not sufficient to activate cGMP and does not inhibit collecting duct transport nor effect diuresis and natriuresis. Appears to bind to specific receptors that are distinct from the receptors bound by the atrial natriuretic and long-acting natriuretic peptides. Possibly functions in protein excretion in urine by maintaining the integrity of the proximal tubules and enhancing protein excretion by decreasing proximal tubular protein reabsorption. In terms of biological role, may have a role in cardio-renal homeostasis through regulation of diuresis and inhibiting aldosterone synthesis. In vitro, promotes the production of cGMP and induces vasodilation. May promote natriuresis, at least in part, by enhancing prostaglandin E2 synthesis resulting in the inhibition of renal Na+-K+-ATPase. May have a role in potassium excretion but not sodium excretion (natriuresis). Possibly enhances protein excretion in urine by decreasing proximal tubular protein reabsorption. Its function is as follows. Hormone produced in the kidneys that appears to be important for maintaining cardio-renal homeostasis. Mediates vasodilation, natriuresis and diuresis primarily in the renal system, in order to maintain the extracellular fluid volume and control the fluid-electrolyte balance. Specifically binds and stimulates cGMP production by renal transmembrane receptors, likely NPR1. Urodilatin not ANP, may be the natriuretic peptide responsible for the regulation of sodium and water homeostasis in the kidney. May have a role in cardio-renal homeostasis through regulation of natriuresis and vasodilation. In vivo promotes natriuresis and in vitro, vasodilates renal artery strips. Functionally, may have a role in cardio-renal homeostasis through regulation of regulation of natriuresis and vasodilation. In vivo promotes natriuresis. In vitro, vasodilates intestinal smooth muscle but not smooth muscle strips. In terms of biological role, may have a role in cardio-renal homeostasis through regulation of natriuresis and vasodilation. In vivo promotes natriuresis. In vitro, selectively vasodilates intestinal and vascular smooth muscle strips. Its function is as follows. May have a role in cardio-renal homeostasis through regulation of natriuresis and vasodilation. In vivo promotes natriuresis. In vitro, selectively vasodilates intestinal smooth muscle but not vascular smooth muscle strips. The protein is Natriuretic peptides A (NPPA) of Bos taurus (Bovine).